The following is a 677-amino-acid chain: UvrABC system protein B (677 aa).

One can recognise a Helicase ATP-binding domain in the interval 31–417 (DRIESGETDI…SDGVVEQIIR (387 aa)). 44-51 (GATGTGKS) is an ATP binding site. The Beta-hairpin signature appears at 97–120 (YYDYYQPEAYVPKTDTFIEKDASV). Residues 434-596 (QIDDLLEEIR…VTPVPIKKTV (163 aa)) form the Helicase C-terminal domain. Residues 629-664 (KSHIKSLEAKMYMAAESLMFEEAAELRDEIQSLKEK) form the UVR domain.

The protein belongs to the UvrB family. Forms a heterotetramer with UvrA during the search for lesions. Interacts with UvrC in an incision complex.

The protein resides in the cytoplasm. The UvrABC repair system catalyzes the recognition and processing of DNA lesions. A damage recognition complex composed of 2 UvrA and 2 UvrB subunits scans DNA for abnormalities. Upon binding of the UvrA(2)B(2) complex to a putative damaged site, the DNA wraps around one UvrB monomer. DNA wrap is dependent on ATP binding by UvrB and probably causes local melting of the DNA helix, facilitating insertion of UvrB beta-hairpin between the DNA strands. Then UvrB probes one DNA strand for the presence of a lesion. If a lesion is found the UvrA subunits dissociate and the UvrB-DNA preincision complex is formed. This complex is subsequently bound by UvrC and the second UvrB is released. If no lesion is found, the DNA wraps around the other UvrB subunit that will check the other stand for damage. In Tropheryma whipplei (strain TW08/27) (Whipple's bacillus), this protein is UvrABC system protein B.